Here is a 1018-residue protein sequence, read N- to C-terminus: MSALCDPPGAPGPPGPAPATHGPAPLSAQELSQEIKAFLTGVDPILGHQLSAREHARCGLLLLRSLPPARAAVLDHLRGVFDESVRAHLAALEESPVAGPPHLRPPPPSHVPTGGPGLEDVVHEVQQVLCEFIRANPKAWAPVISAWSIDLMGQLSSTYSGQHQRVPHATGSLNELLQLWMGCRATRTLMDIYVQCLSALIGSCPDACVDALLDTSVQHSPHFDWVVAHIGSSFPGTIISRVLSCGLKDFCVHSGAGGGASACGNSSQPPSTDPFPGSPAIPGEKRVPKIASVVGILGHLASRHGDSIRRELLRMFHDSLAGGSGGRNGEPSLQATVPFLLQLAVMSPALLGTVSGELVDCLKPPAVLSQLQQHLQGFPREELDNMLNLAVHLVSQASGTGAYRLLQFLVDTAMPASVITTQGLAVPDTVREACDRLIQLLLLHLQKLVHHRGGSPGEGVLGPPPPPRPVPFLDALRNHVGELCGETLRLERKRFLWQHQLLGLLSVYTRPSCGPEALGHLLSRARSPEELSLATQLYAGLVVSLSGLLPLAFRSCLARVHAGTLQPPFTARFLRNLALLVGWEQQGGEGPSALGARFGESASAHLADLAPLLLHPEEEVAEAAASLLAICPFPSEALSPSQLLGLVRAGVHHFFSSLRLHGPPGVASASQLLTRLSQTSPAGLKAVLQLLVEGALHRGNTELFGGEMDGDNETLSIVSTPLASASLLDINRRHTAAVPGPGGIWSVFHAGVIGRGLKPPKIVQSRNHQEVIYNTQSLVSLLVHCCSASGNSEREGCWGAPTLSPEAAKAVAVTLVESVCPDAAGAELAWPPEDHARATVERDLRIGRRFREQPLLFELLKLVAAAPPALCYCSVLLRGLLAALLSHWEASRHPDTTHSPWHLEASCILVAVMAEGSLLPPALGNMHEVFSQLAPFEVRLLLLSVWGFLREHGPLPQKFIFQSERGRFIRDFAREGGAEGGPHLSVLHSVLHRNIDRLGLFSGRFQAPPPSTLLRQGT.

The interval 1–26 (MSALCDPPGAPGPPGPAPATHGPAPL) is disordered. The residue at position 2 (S2) is an N-acetylserine. The segment covering 8 to 17 (PGAPGPPGPA) has biased composition (pro residues). A Phosphoserine modification is found at S278. 3 helical membrane passes run 533 to 553 (LATQLYAGLVVSLSGLLPLAF), 855 to 875 (LLFELLKLVAAAPPALCYCSV), and 929 to 949 (VFSQLAPFEVRLLLLSVWGFL).

The protein belongs to the Integrator subunit 5 family. Component of the Integrator complex, composed of core subunits INTS1, INTS2, INTS3, INTS4, INTS5, INTS6, INTS7, INTS8, INTS9/RC74, INTS10, INTS11/CPSF3L, INTS12, INTS13, INTS14 and INTS15. The core complex associates with protein phosphatase 2A subunits PPP2CA and PPP2R1A, to form the Integrator-PP2A (INTAC) complex.

The protein resides in the nucleus. Its subcellular location is the cytoplasm. The protein localises to the nucleus membrane. Its function is as follows. Component of the integrator complex, a multiprotein complex that terminates RNA polymerase II (Pol II) transcription in the promoter-proximal region of genes. The integrator complex provides a quality checkpoint during transcription elongation by driving premature transcription termination of transcripts that are unfavorably configured for transcriptional elongation: the complex terminates transcription by (1) catalyzing dephosphorylation of the C-terminal domain (CTD) of Pol II subunit POLR2A/RPB1 and SUPT5H/SPT5, (2) degrading the exiting nascent RNA transcript via endonuclease activity and (3) promoting the release of Pol II from bound DNA. The integrator complex is also involved in terminating the synthesis of non-coding Pol II transcripts, such as enhancer RNAs (eRNAs), small nuclear RNAs (snRNAs), telomerase RNAs and long non-coding RNAs (lncRNAs). Mediates recruitment of cytoplasmic dynein to the nuclear envelope, probably as component of the integrator complex. The protein is Integrator complex subunit 5 (Ints5) of Mus musculus (Mouse).